Here is an 89-residue protein sequence, read N- to C-terminus: MASLYDNEAKIKQAIIMLQKIVNDTSVPRNIRRAATDAIRNLQDSSLSPAVRAANAIGILEEISQDPNMPTHTRISIWNVVSMLETVKD.

The protein belongs to the UPF0147 family.

In Sulfurisphaera tokodaii (strain DSM 16993 / JCM 10545 / NBRC 100140 / 7) (Sulfolobus tokodaii), this protein is UPF0147 protein STK_04605.